The following is a 171-amino-acid chain: Myosin regulatory light chain 12B (171 aa).

The residue at position 18 (Thr18) is a Phosphothreonine; by MLCK and ZIPK/DAPK3. Ser19 is modified (phosphoserine; by MLCK and ZIPK/DAPK3). EF-hand domains follow at residues 28 to 63 (SQIQEFKEAFNMIDQNRDGFIDKEDLHDMLASLGKN), 97 to 132 (DPEDVIRNAFACFDEEATGTIQEDYLRELLTTMGDR), and 133 to 168 (FTDEEVDELYREAPIDKKGNFNYIEFTRILKHGAKD). Ca(2+) is bound by residues Asp41, Asn43, Asp45, and Asp52.

In terms of assembly, myosin is a hexamer of 2 heavy chains and 4 light chains: interacts with myosin heavy chain MYO19. Post-translationally, phosphorylation increases the actin-activated myosin ATPase activity and thereby regulates the contractile activity. It is required to generate the driving force in the migration of the cells but not necessary for localization of myosin-2 at the leading edge. Phosphorylation is reduced following epigallocatechin-3-O-gallate treatment.

In terms of biological role, myosin regulatory subunit that plays an important role in regulation of both smooth muscle and nonmuscle cell contractile activity via its phosphorylation. Phosphorylation triggers actin polymerization in vascular smooth muscle. Implicated in cytokinesis, receptor capping, and cell locomotion. This Bos taurus (Bovine) protein is Myosin regulatory light chain 12B (MYL12B).